Consider the following 369-residue polypeptide: Anhydro-N-acetylmuramic acid kinase (369 aa).

An ATP-binding site is contributed by 12–19; it reads GTSMDGVD.

Belongs to the anhydro-N-acetylmuramic acid kinase family.

The catalysed reaction is 1,6-anhydro-N-acetyl-beta-muramate + ATP + H2O = N-acetyl-D-muramate 6-phosphate + ADP + H(+). It participates in amino-sugar metabolism; 1,6-anhydro-N-acetylmuramate degradation. It functions in the pathway cell wall biogenesis; peptidoglycan recycling. Its function is as follows. Catalyzes the specific phosphorylation of 1,6-anhydro-N-acetylmuramic acid (anhMurNAc) with the simultaneous cleavage of the 1,6-anhydro ring, generating MurNAc-6-P. Is required for the utilization of anhMurNAc either imported from the medium or derived from its own cell wall murein, and thus plays a role in cell wall recycling. The chain is Anhydro-N-acetylmuramic acid kinase from Shewanella putrefaciens (strain CN-32 / ATCC BAA-453).